The primary structure comprises 512 residues: ATP synthase subunit alpha (512 aa).

ATP is bound at residue 169-176 (GDRQTGKT).

It belongs to the ATPase alpha/beta chains family. As to quaternary structure, F-type ATPases have 2 components, CF(1) - the catalytic core - and CF(0) - the membrane proton channel. CF(1) has five subunits: alpha(3), beta(3), gamma(1), delta(1), epsilon(1). CF(0) has three main subunits: a(1), b(2) and c(9-12). The alpha and beta chains form an alternating ring which encloses part of the gamma chain. CF(1) is attached to CF(0) by a central stalk formed by the gamma and epsilon chains, while a peripheral stalk is formed by the delta and b chains.

The protein resides in the cell inner membrane. It catalyses the reaction ATP + H2O + 4 H(+)(in) = ADP + phosphate + 5 H(+)(out). Functionally, produces ATP from ADP in the presence of a proton gradient across the membrane. The alpha chain is a regulatory subunit. This is ATP synthase subunit alpha from Rickettsia bellii (strain OSU 85-389).